Consider the following 489-residue polypeptide: UDP-N-acetylmuramoylalanine--D-glutamate ligase (489 aa).

Residue 126–132 coordinates ATP; that stretch reads GTNGKTT.

It belongs to the MurCDEF family.

The protein resides in the cytoplasm. The enzyme catalyses UDP-N-acetyl-alpha-D-muramoyl-L-alanine + D-glutamate + ATP = UDP-N-acetyl-alpha-D-muramoyl-L-alanyl-D-glutamate + ADP + phosphate + H(+). It functions in the pathway cell wall biogenesis; peptidoglycan biosynthesis. Its function is as follows. Cell wall formation. Catalyzes the addition of glutamate to the nucleotide precursor UDP-N-acetylmuramoyl-L-alanine (UMA). The sequence is that of UDP-N-acetylmuramoylalanine--D-glutamate ligase from Mycolicibacterium paratuberculosis (strain ATCC BAA-968 / K-10) (Mycobacterium paratuberculosis).